The sequence spans 257 residues: Insulin-induced gene 1 protein (257 aa).

Over 1–64 (MPRLHDHVWS…ARPGSWHHDL (64 aa)) the chain is Cytoplasmic. The tract at residues 32-54 (CPQGSGAPEPAPRSPRAGTAGCG) is disordered. The helical transmembrane segment at 65–87 (VQRSLVLFSFGVVLALVLNLLQI) threads the bilayer. The Extracellular segment spans residues 88–106 (QRNVTLFPDEVIATIFSSA). A helical transmembrane segment spans residues 107–124 (WWVPPCCGTAAAVVGLLY). The Cytoplasmic segment spans residues 125–139 (PCIDSHLGEPHKFKR). Residues Lys136 and Lys138 each participate in a glycyl lysine isopeptide (Lys-Gly) (interchain with G-Cter in ubiquitin) cross-link. The helical transmembrane segment at 140-162 (EWASVMRCIAVFVGINHASAKLD) threads the bilayer. Over 163–165 (FAN) the chain is Extracellular. The chain crosses the membrane as a helical span at residues 166–184 (NVQLSLTLAALSLGLWWTF). The Cytoplasmic segment spans residues 185–189 (DRSRS). Residue Ser187 is modified to Phosphoserine. A helical membrane pass occupies residues 190–211 (GLGLGITIAFLATLITQFLVYN). Residues 212–225 (GVYQYTSPDFLYIR) lie on the Extracellular side of the membrane. Residues 226–243 (SWLPCIFFSGGVTVGNIG) form a helical membrane-spanning segment. Residues 244–257 (RQLAMGVPEKPHSD) lie on the Cytoplasmic side of the membrane. The short motif at 251-257 (PEKPHSD) is the KxHxx element.

It belongs to the INSIG family. As to quaternary structure, interacts with SCAP; interaction is direct and only takes place in the presence of sterols; it prevents interaction between SCAP and the coat protein complex II (COPII). Associates with the SCAP-SREBP complex (composed of SCAP and SREBF1/SREBP1 or SREBF2/SREBP2); association is mediated via its interaction with SCAP and only takes place in the presence of sterols. Interaction with SCAP is mutually exclusive with PAQR3. Interacts with HMGCR (via its SSD); the interaction, accelerated by sterols, leads to the recruitment of HMGCR to AMFR/gp78 for its ubiquitination by the sterol-mediated ERAD pathway. Interacts with AMFR/gp78 (via its membrane domain); the interaction recruits HMCR at the ER membrane for its ubiquitination and degradation by the sterol-mediated ERAD pathway. Interacts with SOAT2/ACAT2; leading to promote recruitment of AMFR/gp78 and subsequent ubiquitination of SOAT2/ACAT2. Interacts with RNF139. Interacts with RNF145. Phosphorylation at Ser-187 by PCK1 reduces binding to oxysterol, disrupting the interaction between INSIG1 and SCAP, thereby promoting nuclear translocation of SREBP proteins (SREBF1/SREBP1 or SREBF2/SREBP2) and subsequent transcription of downstream lipogenesis-related genes. In terms of processing, ubiquitinated by AMFR/gp78 in response to sterol deprivation, leading to its degradation: when the SCAP-SREBP complex becomes dissociated from INSIG1, INSIG1 is then ubiquitinated and degraded in proteasomes. Although ubiquitination is required for rapid INSIG1 degradation, it is not required for release of the SCAP-SREBP complex. Ubiquitinated by RNF139.

The protein localises to the endoplasmic reticulum membrane. Oxysterol-binding protein that mediates feedback control of cholesterol synthesis by controlling both endoplasmic reticulum to Golgi transport of SCAP and degradation of HMGCR. Acts as a negative regulator of cholesterol biosynthesis by mediating the retention of the SCAP-SREBP complex in the endoplasmic reticulum, thereby blocking the processing of sterol regulatory element-binding proteins (SREBPs) SREBF1/SREBP1 and SREBF2/SREBP2. Binds oxysterol, including 25-hydroxycholesterol, regulating interaction with SCAP and retention of the SCAP-SREBP complex in the endoplasmic reticulum. In presence of oxysterol, interacts with SCAP, retaining the SCAP-SREBP complex in the endoplasmic reticulum, thereby preventing SCAP from escorting SREBF1/SREBP1 and SREBF2/SREBP2 to the Golgi. Sterol deprivation or phosphorylation by PCK1 reduce oxysterol-binding, disrupting the interaction between INSIG1 and SCAP, thereby promoting Golgi transport of the SCAP-SREBP complex, followed by processing and nuclear translocation of SREBF1/SREBP1 and SREBF2/SREBP2. Also regulates cholesterol synthesis by regulating degradation of HMGCR: initiates the sterol-mediated ubiquitin-mediated endoplasmic reticulum-associated degradation (ERAD) of HMGCR via recruitment of the reductase to the ubiquitin ligases AMFR/gp78 and/or RNF139. Also regulates degradation of SOAT2/ACAT2 when the lipid levels are low: initiates the ubiquitin-mediated degradation of SOAT2/ACAT2 via recruitment of the ubiquitin ligases AMFR/gp78. In Cricetulus griseus (Chinese hamster), this protein is Insulin-induced gene 1 protein.